A 1372-amino-acid chain; its full sequence is DNA-directed RNA polymerase subunit beta (1372 aa).

The protein belongs to the RNA polymerase beta chain family. The RNAP catalytic core consists of 2 alpha, 1 beta, 1 beta' and 1 omega subunit. When a sigma factor is associated with the core the holoenzyme is formed, which can initiate transcription.

It carries out the reaction RNA(n) + a ribonucleoside 5'-triphosphate = RNA(n+1) + diphosphate. In terms of biological role, DNA-dependent RNA polymerase catalyzes the transcription of DNA into RNA using the four ribonucleoside triphosphates as substrates. In Bradyrhizobium diazoefficiens (strain JCM 10833 / BCRC 13528 / IAM 13628 / NBRC 14792 / USDA 110), this protein is DNA-directed RNA polymerase subunit beta.